A 214-amino-acid chain; its full sequence is Transcription factor 23 (214 aa).

2 disordered regions span residues 1 to 86 and 174 to 214; these read MSQR…ARER and DSTT…LGDK. Positions 40–49 are enriched in basic and acidic residues; that stretch reads TRQDPWEERS. The bHLH domain occupies 76 to 128; it reads EASPENAARERSRVRTLRQAFLALQAALPAVPPDTKLSKLDVLVLAASYIAHL. Residues 174–183 are compositionally biased toward polar residues; it reads DSTTASTPSQ.

Forms inactive heterodimeric complexes with TCF3. In terms of tissue distribution, expressed in liver, kidney and spleen.

It is found in the nucleus. In terms of biological role, inhibits E-box-mediated binding and transactivation of bHLH factors. Inhibitory effect is similar to that of ID proteins. Inhibits the formation of TCF3 and MYOD1 homodimers and heterodimers. Lacks DNA binding activity. Seems to play a role in the inhibition of myogenesis. The protein is Transcription factor 23 (TCF23) of Homo sapiens (Human).